The sequence spans 360 residues: Phenylalanine--tRNA ligase alpha subunit (360 aa).

A Mg(2+)-binding site is contributed by glutamate 260.

The protein belongs to the class-II aminoacyl-tRNA synthetase family. Phe-tRNA synthetase alpha subunit type 1 subfamily. As to quaternary structure, tetramer of two alpha and two beta subunits. Requires Mg(2+) as cofactor.

The protein localises to the cytoplasm. It catalyses the reaction tRNA(Phe) + L-phenylalanine + ATP = L-phenylalanyl-tRNA(Phe) + AMP + diphosphate + H(+). This is Phenylalanine--tRNA ligase alpha subunit from Rhodopseudomonas palustris (strain BisB5).